The primary structure comprises 221 residues: DVLPDSIDWREKGAVVPVKNQGGCGSCWAFDAIAAVEGINQIVTGDLISLSEQQLVDCSTRNHGCEGGWPYRAFQYIINNGGINSEEHYPYTGTNGTCDTKENAHVVSIDSYRNVPSNDEKSLQKAVANQPVSVTMDAAGRDFQLYRNGIFTGSCNISANHYRTVGGRETENDKDYWTVKNSWGKNWGESGYIRVERNIAESSGKCGIAISPSYPIKEXXX.

3 disulfide bridges follow: Cys24/Cys65, Cys58/Cys98, and Cys155/Cys206. Cys27 is a catalytic residue. Asn95 and Asn156 each carry an N-linked (GlcNAc...) asparagine glycan. Residues His161 and Asn181 contribute to the active site.

This sequence belongs to the peptidase C1 family.

It carries out the reaction Preferential cleavage of peptides with a proline residue at the P2 position.. Cysteine proteinase with a high level of diversity in substrate specificity, an amino acid bearing a proline residue at the P2 position is preferred. The protein is Zingipain-1 of Zingiber officinale (Ginger).